We begin with the raw amino-acid sequence, 2005 residues long: Chitin synthase 8 (2005 aa).

One can recognise a Myosin motor domain in the interval 5 to 773; it reads DEVAKLSQLT…AFRELEDELR (769 aa). 108 to 115 is a binding site for ATP; sequence GDTSSGKS. N-linked (GlcNAc...) asparagine glycans are attached at residues asparagine 164, asparagine 364, asparagine 390, and asparagine 546. Residues 585 to 631 form a disordered region; it reads QSVKPMRAPSTRRPNRGNTIKRTNTIKKADDDDSDEDAADAADASTS. Over residues 615–624 the composition is skewed to acidic residues; sequence DDDSDEDAAD. The tract at residues 647–669 is actin-binding; the sequence is LDLLLETLEDTKTWFTLCLRPND. 2 consecutive transmembrane segments (helical) span residues 929 to 949 and 965 to 985; these read KWVA…LSRF and LAIN…IVVL. An N-linked (GlcNAc...) asparagine glycan is attached at asparagine 1076. Transmembrane regions (helical) follow at residues 1232 to 1252, 1604 to 1624, and 1626 to 1646; these read ILLA…LAAL, LIFT…IVFI, and LLST…IVLV. Asparagine 1650 carries N-linked (GlcNAc...) asparagine glycosylation. The next 2 helical transmembrane spans lie at 1653–1673 and 1680–1700; these read VPLT…VIFL and MIGW…FLPL. N-linked (GlcNAc...) asparagine glycosylation is found at asparagine 1770 and asparagine 1794. A disordered region spans residues 1796–1821; the sequence is SFGHSPSPSYGGTPSQFGAFAPGPGS. The span at 1797 to 1811 shows a compositional bias: polar residues; the sequence is FGHSPSPSYGGTPSQ. Residue asparagine 1882 is glycosylated (N-linked (GlcNAc...) asparagine). The tract at residues 1912–1950 is disordered; that stretch reads FATAEQQQQQQQQQQAAGLSGSGGSKSPPREAVAGGLPS. A compositionally biased stretch (low complexity) spans 1917–1930; it reads QQQQQQQQQQAAGL. Positions 1948–2003 constitute a DEK-C domain; the sequence is LPSDSQIKLDIRSLIAESDLTTITKKQLRAKLEQKYATSIESKKAFINSEIENVLS.

In the N-terminal section; belongs to the TRAFAC class myosin-kinesin ATPase superfamily. Myosin family. This sequence in the C-terminal section; belongs to the chitin synthase family. Class V subfamily.

It is found in the cell membrane. Its subcellular location is the cytoplasmic vesicle membrane. It localises to the cell tip. It catalyses the reaction [(1-&gt;4)-N-acetyl-beta-D-glucosaminyl](n) + UDP-N-acetyl-alpha-D-glucosamine = [(1-&gt;4)-N-acetyl-beta-D-glucosaminyl](n+1) + UDP + H(+). Polymerizes chitin, a structural polymer of the cell wall and septum, by transferring the sugar moiety of UDP-GlcNAc to the non-reducing end of the growing chitin polymer. Involved in mating tube and dikaryotic hyphae formation and required for the formation of invading hyphae during plant infection. The chain is Chitin synthase 8 from Mycosarcoma maydis (Corn smut fungus).